The following is a 111-amino-acid chain: Probable 4-amino-4-deoxy-L-arabinose-phosphoundecaprenol flippase subunit ArnE (111 aa).

3 helical membrane-spanning segments follow: residues 37 to 57 (LIWLGLSVIFLAGGMLLWLKL), 65 to 85 (QAYPFLSINLILVTLSGHFFF), and 91 to 111 (LQHWLGIGIMMVGILLLGQGI).

It belongs to the ArnE family. As to quaternary structure, heterodimer of ArnE and ArnF.

Its subcellular location is the cell inner membrane. The protein operates within bacterial outer membrane biogenesis; lipopolysaccharide biosynthesis. Functionally, translocates 4-amino-4-deoxy-L-arabinose-phosphoundecaprenol (alpha-L-Ara4N-phosphoundecaprenol) from the cytoplasmic to the periplasmic side of the inner membrane. The polypeptide is Probable 4-amino-4-deoxy-L-arabinose-phosphoundecaprenol flippase subunit ArnE (Hamiltonella defensa subsp. Acyrthosiphon pisum (strain 5AT)).